A 336-amino-acid chain; its full sequence is Phosphonate dehydrogenase (336 aa).

NAD(+)-binding positions include 155–156, glutamate 175, 235–237, and aspartate 261; these read AI and PCR. The active site involves arginine 237. Residue glutamate 266 is part of the active site. Histidine 292 functions as the Proton donor in the catalytic mechanism. 292–295 is a binding site for NAD(+); it reads HIGS.

Homodimer.

It catalyses the reaction phosphonate + NAD(+) + H2O = phosphate + NADH + H(+). Its activity is regulated as follows. Inhibited by NaCl, NADH and sulfite. Catalyzes phosphite (phosphonate) oxidation. The chain is Phosphonate dehydrogenase (ptxD) from Stutzerimonas stutzeri (Pseudomonas stutzeri).